The following is a 157-amino-acid chain: Protein Smg (157 aa).

Belongs to the Smg family.

This chain is Protein Smg, found in Escherichia coli O8 (strain IAI1).